A 227-amino-acid chain; its full sequence is Thymidylate kinase (227 aa).

Residue 16-23 (GIDGAGKT) coordinates ATP.

It belongs to the thymidylate kinase family.

It catalyses the reaction dTMP + ATP = dTDP + ADP. Functionally, phosphorylation of dTMP to form dTDP in both de novo and salvage pathways of dTTP synthesis. The sequence is that of Thymidylate kinase from Xanthomonas oryzae pv. oryzae (strain MAFF 311018).